Reading from the N-terminus, the 375-residue chain is MPTMIKKDDKAMEPPNEKPHRKIERDDVPESSNHIPPPESGVLKGGKVNSKTRALKAVTSIIADADENPQKKVNNETNGVQKQKTEDLSKRIGKFEYLFYKFLLVLLYICFGLFRYGQYQYNKMKLRIFSIIYNHAYTPQLIRQDVIPLKKIPKRLAAILEVKPVGDVGGGVTGLLNDASEIVCWTVSAGIKHLMLYDYDGILQRNVPELRMEIHSNLAKYFGPAHVPNYAVKIPHSNKIFYNLDGIETETDVGNEIEANQEKDKIAIEISLLSNRDGRETIVDLTKTMAELCAVNELSVSDITMDLVDSELKQLVGPEPDLLLYFGPSLDLQGFPPWHIRLTEFYWEKDNNEVIYSVFIRGLRQYAGCKVNVGK.

A compositionally biased stretch (basic and acidic residues) spans Met-1–Val-28. Residues Met-1 to Val-48 are disordered. The chain crosses the membrane as a helical span at residues Tyr-97 to Tyr-119.

The protein belongs to the UPP synthase family. Forms an active dehydrodolichyl diphosphate synthase complex with either SRT1 or RER2. Requires Mg(2+) as cofactor.

It localises to the endoplasmic reticulum membrane. The protein localises to the lipid droplet. The protein resides in the nucleus membrane. The enzyme catalyses n isopentenyl diphosphate + (2E,6E)-farnesyl diphosphate = a di-trans,poly-cis-polyprenyl diphosphate + n diphosphate. Its pathway is protein modification; protein glycosylation. Its function is as follows. With SRT1 or RER2, forms the dehydrodolichyl diphosphate synthase (DDS) complex, an essential component of the dolichol monophosphate (Dol-P) biosynthetic machinery. Adds multiple copies of isopentenyl pyrophosphate (IPP) to farnesyl pyrophosphate (FPP) to produce dehydrodolichyl diphosphate (Dedol-PP), a precursor of dolichol which is utilized as a sugar carrier in protein glycosylation in the endoplasmic reticulum (ER). This chain is Dehydrodolichyl diphosphate synthase complex subunit NUS1 (NUS1), found in Saccharomyces cerevisiae (strain ATCC 204508 / S288c) (Baker's yeast).